Reading from the N-terminus, the 693-residue chain is Golgin subfamily A member 6C (693 aa).

Disordered stretches follow at residues Asn-20–Tyr-71, Leu-497–Gln-547, and Asn-629–Thr-693. Residues Glu-73–Leu-611 are a coiled coil. The segment covering Leu-537–Gln-547 has biased composition (basic and acidic residues). Polar residues predominate over residues Pro-679–Thr-693.

This sequence belongs to the GOLGA6 family.

This chain is Golgin subfamily A member 6C (GOLGA6C), found in Homo sapiens (Human).